Reading from the N-terminus, the 875-residue chain is Kelch-like protein 29 (875 aa).

Residues Ile-113–Trp-126 are compositionally biased toward polar residues. Disordered regions lie at residues Ile-113 to Gly-145 and Gly-240 to His-291. The span at Pro-131–Asp-140 shows a compositional bias: basic and acidic residues. Over residues Pro-270–Ala-280 the composition is skewed to low complexity. A BTB domain is found at Thr-329–Ser-401. 6 Kelch repeats span residues Val-585–Gly-635, Asn-637–Gly-683, Lys-684–Gly-730, Ile-732–Gly-778, Phe-779–Gly-821, and Lys-822–Lys-870.

This chain is Kelch-like protein 29 (Klhl29), found in Mus musculus (Mouse).